Here is a 308-residue protein sequence, read N- to C-terminus: Porphobilinogen deaminase (308 aa).

Cysteine 240 is modified (S-(dipyrrolylmethanemethyl)cysteine).

This sequence belongs to the HMBS family. Monomer. Dipyrromethane serves as cofactor.

It catalyses the reaction 4 porphobilinogen + H2O = hydroxymethylbilane + 4 NH4(+). The protein operates within porphyrin-containing compound metabolism; protoporphyrin-IX biosynthesis; coproporphyrinogen-III from 5-aminolevulinate: step 2/4. Tetrapolymerization of the monopyrrole PBG into the hydroxymethylbilane pre-uroporphyrinogen in several discrete steps. The protein is Porphobilinogen deaminase of Campylobacter hominis (strain ATCC BAA-381 / DSM 21671 / CCUG 45161 / LMG 19568 / NCTC 13146 / CH001A).